The following is a 155-amino-acid chain: uncharacterized protein (155 aa).

The first 30 residues, 1–30 (MTYNTNTSLSSYAGLSAFALSVFCILWGTA), serve as a signal peptide directing secretion.

This is an uncharacterized protein from Treponema pallidum (strain Nichols).